Here is a 160-residue protein sequence, read N- to C-terminus: Cytochrome b6-f complex subunit 4 (160 aa).

A run of 3 helical transmembrane segments spans residues 36 to 56 (LLYM…GLAV), 95 to 115 (LLGV…PFIE), and 131 to 151 (TVFL…TLPI).

It belongs to the cytochrome b family. PetD subfamily. The 4 large subunits of the cytochrome b6-f complex are cytochrome b6, subunit IV (17 kDa polypeptide, petD), cytochrome f and the Rieske protein, while the 4 small subunits are petG, petL, petM and petN. The complex functions as a dimer.

The protein resides in the plastid. The protein localises to the chloroplast thylakoid membrane. Component of the cytochrome b6-f complex, which mediates electron transfer between photosystem II (PSII) and photosystem I (PSI), cyclic electron flow around PSI, and state transitions. The protein is Cytochrome b6-f complex subunit 4 of Coleochaete orbicularis (Charophycean green alga).